The chain runs to 477 residues: Leukotoxin export protein LtxD (477 aa).

Residues 64–84 (IMLFLTLAIIVSIFSNVEIIA) form a helical membrane-spanning segment. Residues 206–287 (LNLNKKEAEK…ENEVLLAKEE (82 aa)) are a coiled coil.

The protein belongs to the membrane fusion protein (MFP) (TC 8.A.1) family. In terms of assembly, probably part of a complex composed of LtxB, LtxD and TdeA, which forms a single transport channel across the two membranes.

It is found in the cell inner membrane. Its function is as follows. Involved in the export of the LtxA leukotoxin. In Aggregatibacter actinomycetemcomitans (Actinobacillus actinomycetemcomitans), this protein is Leukotoxin export protein LtxD.